Here is a 108-residue protein sequence, read N- to C-terminus: Large ribosomal subunit protein uL24 (108 aa).

The protein belongs to the universal ribosomal protein uL24 family. Part of the 50S ribosomal subunit.

Functionally, one of two assembly initiator proteins, it binds directly to the 5'-end of the 23S rRNA, where it nucleates assembly of the 50S subunit. One of the proteins that surrounds the polypeptide exit tunnel on the outside of the subunit. The sequence is that of Large ribosomal subunit protein uL24 from Mycoplasma genitalium (strain ATCC 33530 / DSM 19775 / NCTC 10195 / G37) (Mycoplasmoides genitalium).